Consider the following 395-residue polypeptide: S-adenosylmethionine synthase 5 (395 aa).

Position 10 (glutamate 10) interacts with Mg(2+). Residue histidine 16 coordinates ATP. Residue glutamate 44 participates in K(+) binding. Residues glutamate 57 and glutamine 100 each contribute to the L-methionine site. Residues 168–170, 236–239, aspartate 247, 253–254, alanine 270, lysine 274, and lysine 278 contribute to the ATP site; these read DGK, SGRF, and RK. Aspartate 247 serves as a coordination point for L-methionine. Residue lysine 278 coordinates L-methionine.

This sequence belongs to the AdoMet synthase family. As to quaternary structure, homotetramer. Mn(2+) is required as a cofactor. Mg(2+) serves as cofactor. The cofactor is Co(2+). It depends on K(+) as a cofactor.

It is found in the cytoplasm. The enzyme catalyses L-methionine + ATP + H2O = S-adenosyl-L-methionine + phosphate + diphosphate. It participates in amino-acid biosynthesis; S-adenosyl-L-methionine biosynthesis; S-adenosyl-L-methionine from L-methionine: step 1/1. Its function is as follows. Catalyzes the formation of S-adenosylmethionine from methionine and ATP. The reaction comprises two steps that are both catalyzed by the same enzyme: formation of S-adenosylmethionine (AdoMet) and triphosphate, and subsequent hydrolysis of the triphosphate. The sequence is that of S-adenosylmethionine synthase 5 (METK5) from Populus trichocarpa (Western balsam poplar).